We begin with the raw amino-acid sequence, 160 residues long: Ribosomal RNA large subunit methyltransferase H (160 aa).

Positions 76 and 108 each coordinate S-adenosyl-L-methionine.

It belongs to the RNA methyltransferase RlmH family. In terms of assembly, homodimer.

It is found in the cytoplasm. It catalyses the reaction pseudouridine(1915) in 23S rRNA + S-adenosyl-L-methionine = N(3)-methylpseudouridine(1915) in 23S rRNA + S-adenosyl-L-homocysteine + H(+). Its function is as follows. Specifically methylates the pseudouridine at position 1915 (m3Psi1915) in 23S rRNA. The polypeptide is Ribosomal RNA large subunit methyltransferase H (Nitrobacter hamburgensis (strain DSM 10229 / NCIMB 13809 / X14)).